We begin with the raw amino-acid sequence, 572 residues long: Proline--tRNA ligase (572 aa).

Belongs to the class-II aminoacyl-tRNA synthetase family. ProS type 1 subfamily. In terms of assembly, homodimer.

It localises to the cytoplasm. It catalyses the reaction tRNA(Pro) + L-proline + ATP = L-prolyl-tRNA(Pro) + AMP + diphosphate. Functionally, catalyzes the attachment of proline to tRNA(Pro) in a two-step reaction: proline is first activated by ATP to form Pro-AMP and then transferred to the acceptor end of tRNA(Pro). As ProRS can inadvertently accommodate and process non-cognate amino acids such as alanine and cysteine, to avoid such errors it has two additional distinct editing activities against alanine. One activity is designated as 'pretransfer' editing and involves the tRNA(Pro)-independent hydrolysis of activated Ala-AMP. The other activity is designated 'posttransfer' editing and involves deacylation of mischarged Ala-tRNA(Pro). The misacylated Cys-tRNA(Pro) is not edited by ProRS. The protein is Proline--tRNA ligase of Haemophilus influenzae (strain 86-028NP).